The chain runs to 77 residues: MSNIEERVKKITVEQLGVSEAEVKIDSSFVDDLGADSLDTVELVMALEEEFDTEIPDEEAEKITTVQAAIDYVTANQ.

The 76-residue stretch at 2 to 77 (SNIEERVKKI…AAIDYVTANQ (76 aa)) folds into the Carrier domain. Serine 37 is modified (O-(pantetheine 4'-phosphoryl)serine).

Belongs to the acyl carrier protein (ACP) family. 4'-phosphopantetheine is transferred from CoA to a specific serine of apo-ACP by AcpS. This modification is essential for activity because fatty acids are bound in thioester linkage to the sulfhydryl of the prosthetic group.

It localises to the cytoplasm. It participates in lipid metabolism; fatty acid biosynthesis. In terms of biological role, carrier of the growing fatty acid chain in fatty acid biosynthesis. This Colwellia psychrerythraea (strain 34H / ATCC BAA-681) (Vibrio psychroerythus) protein is Acyl carrier protein.